The sequence spans 349 residues: Hydroxymethylglutaryl-CoA synthase (349 aa).

Residues Asp30 and Ala31 each coordinate (3S)-3-hydroxy-3-methylglutaryl-CoA. Glu82 functions as the Proton donor/acceptor in the catalytic mechanism. Residues Cys114 and Thr155 each coordinate (3S)-3-hydroxy-3-methylglutaryl-CoA. The active-site Acyl-thioester intermediate is Cys114. Arg203 is a CoA binding site. Positions 205 and 238 each coordinate (3S)-3-hydroxy-3-methylglutaryl-CoA. The active-site Proton donor/acceptor is the His238. Lys243 provides a ligand contact to CoA. Residues Asn270 and Ser300 each contribute to the (3S)-3-hydroxy-3-methylglutaryl-CoA site.

It belongs to the thiolase-like superfamily. Archaeal HMG-CoA synthase family. As to quaternary structure, interacts with acetoacetyl-CoA thiolase that catalyzes the precedent step in the pathway and with a DUF35 protein. The acetoacetyl-CoA thiolase/HMG-CoA synthase complex channels the intermediate via a fused CoA-binding site, which allows for efficient coupling of the endergonic thiolase reaction with the exergonic HMGCS reaction.

It carries out the reaction acetoacetyl-CoA + acetyl-CoA + H2O = (3S)-3-hydroxy-3-methylglutaryl-CoA + CoA + H(+). The protein operates within metabolic intermediate biosynthesis; (R)-mevalonate biosynthesis; (R)-mevalonate from acetyl-CoA: step 2/3. Catalyzes the condensation of acetyl-CoA with acetoacetyl-CoA to form 3-hydroxy-3-methylglutaryl-CoA (HMG-CoA). Functions in the mevalonate (MVA) pathway leading to isopentenyl diphosphate (IPP), a key precursor for the biosynthesis of isoprenoid compounds that are building blocks of archaeal membrane lipids. The protein is Hydroxymethylglutaryl-CoA synthase of Methanococcus vannielii (strain ATCC 35089 / DSM 1224 / JCM 13029 / OCM 148 / SB).